The primary structure comprises 438 residues: Coenzyme A disulfide reductase (438 aa).

8–33 lines the FAD pocket; sequence GAVAGGATCASQIRRLDKESDIIIFE. Substrate-binding residues include threonine 15, glutamine 19, arginine 22, serine 39, and asparagine 42. The Nucleophile role is filled by cysteine 43. The active-site Redox-active is cysteine 43. Lysine 71 provides a ligand contact to substrate. 151 to 166 contacts NADP(+); it reads VLVVGAGYVSLEVLEN. 267 to 277 contacts FAD; the sequence is TNVPNIYAIGD. Histidine 299 is a substrate binding site. Tyrosine 419 contributes to the FAD binding site. Lysine 427 contacts substrate.

This sequence belongs to the class-III pyridine nucleotide-disulfide oxidoreductase family. In terms of assembly, homodimer. It depends on FAD as a cofactor.

The catalysed reaction is NADP(+) + 2 CoA = CoA-disulfide + NADPH + H(+). Its function is as follows. Catalyzes specifically the NADPH-dependent reduction of coenzyme A disulfide. Is also active with other disulfide substrates containing at least one 4'-phosphopantethienyl moiety such as 4,4'-diphosphopantethine, but is not able to reduce oxidized glutathione, cystine, pantethine, or H(2)O(2). In Staphylococcus aureus (strain NCTC 8325 / PS 47), this protein is Coenzyme A disulfide reductase (cdr).